Reading from the N-terminus, the 502-residue chain is MSEQYILAIDEGTTSTREIIFNYAGQQVASVAREFTQYFPKPGWVEHQAEEIWNAVQITTSTALINSAIRPDQLAVIGITNQRETTVVWDKETGRPIYPAIVWQSRQTSDIAEKLVKDSYSEMIRQKTGLVIAPYFSATKIRWILDHLEGAQERAEKGELLFGTIDTWLVWKLTRGKVHVTDCTNASRTMLFNIHDLTWDQEILDLLKIPRTMLPEVKSNSEVYGETDPYQFFGGRVPIAGMAGDQQAALFGQLAVKPGMVKNTYETGSFIVMNTGEEPIESKNNLLTTIGYKLGDQVNYALEGSVFVAGSAIQWLRDSVKLLNSAPESEQAALESKDANEVYVVPAFTGLGAPYWDSEARGAIFGLTRGSSDKDLIKATLQSLAYQTRDVVDTMQKDSGIEIPVLRVDGGASNNNYLLQFQADLLGKKIERAADLETTGLGAAFLAGLAVGYWQDLDSLKEIAKTGAAFAPKMEEAERDRLYAGWQRAVLATRVFAHGKDF.

Residue threonine 13 coordinates ADP. The ATP site is built by threonine 13, threonine 14, and serine 15. Threonine 13 is a sn-glycerol 3-phosphate binding site. Residue arginine 17 coordinates ADP. Residues arginine 83, glutamate 84, tyrosine 135, and aspartate 245 each contribute to the sn-glycerol 3-phosphate site. Glycerol is bound by residues arginine 83, glutamate 84, tyrosine 135, aspartate 245, and glutamine 246. Threonine 267 and glycine 310 together coordinate ADP. ATP is bound by residues threonine 267, glycine 310, glutamine 314, and glycine 411. Glycine 411 and asparagine 415 together coordinate ADP.

It belongs to the FGGY kinase family. As to quaternary structure, homotetramer and homodimer (in equilibrium).

The catalysed reaction is glycerol + ATP = sn-glycerol 3-phosphate + ADP + H(+). It functions in the pathway polyol metabolism; glycerol degradation via glycerol kinase pathway; sn-glycerol 3-phosphate from glycerol: step 1/1. Activated by phosphorylation and inhibited by fructose 1,6-bisphosphate (FBP). In terms of biological role, key enzyme in the regulation of glycerol uptake and metabolism. Catalyzes the phosphorylation of glycerol to yield sn-glycerol 3-phosphate. This Lactobacillus delbrueckii subsp. bulgaricus (strain ATCC BAA-365 / Lb-18) protein is Glycerol kinase.